The chain runs to 926 residues: DNA mismatch repair protein MutS (926 aa).

The interval 1–67 (MAASPNPLQG…NPNQINDLDQ (67 aa)) is disordered. Composition is skewed to polar residues over residues 18 to 44 (QSTT…QLKS) and 57 to 67 (KNPNQINDLDQ). 726 to 733 (GPNASGKS) contacts ATP.

The protein belongs to the DNA mismatch repair MutS family.

Functionally, this protein is involved in the repair of mismatches in DNA. It is possible that it carries out the mismatch recognition step. This protein has a weak ATPase activity. This chain is DNA mismatch repair protein MutS, found in Prochlorococcus marinus (strain NATL1A).